We begin with the raw amino-acid sequence, 38 residues long: Photosystem II reaction center protein L (38 aa).

Residues 17-37 traverse the membrane as a helical segment; the sequence is SLYWGLLLIFVLAVLFSSYFF.

The protein belongs to the PsbL family. PSII is composed of 1 copy each of membrane proteins PsbA, PsbB, PsbC, PsbD, PsbE, PsbF, PsbH, PsbI, PsbJ, PsbK, PsbL, PsbM, PsbT, PsbX, PsbY, PsbZ, Psb30/Ycf12, at least 3 peripheral proteins of the oxygen-evolving complex and a large number of cofactors. It forms dimeric complexes.

Its subcellular location is the plastid. The protein resides in the chloroplast thylakoid membrane. In terms of biological role, one of the components of the core complex of photosystem II (PSII). PSII is a light-driven water:plastoquinone oxidoreductase that uses light energy to abstract electrons from H(2)O, generating O(2) and a proton gradient subsequently used for ATP formation. It consists of a core antenna complex that captures photons, and an electron transfer chain that converts photonic excitation into a charge separation. This subunit is found at the monomer-monomer interface and is required for correct PSII assembly and/or dimerization. This chain is Photosystem II reaction center protein L, found in Thalassiosira pseudonana (Marine diatom).